A 79-amino-acid polypeptide reads, in one-letter code: Serine protease inhibitor Kazal-type 1 (79 aa).

The N-terminal stretch at 1 to 23 is a signal peptide; the sequence is MKVASIFLLTALVLMSLSGNSGA. The region spanning 26–79 is the Kazal-like domain; sequence LGREAKCTNEVNGCPRIYNPVCGTDGVTYSNECLLCMENKERQTPVLIQKSGPC. Intrachain disulfides connect C32–C61, C39–C58, and C47–C79.

The protein localises to the secreted. In terms of biological role, serine protease inhibitor which exhibits anti-trypsin activity. In the pancreas, protects against trypsin-catalyzed premature activation of zymogens. In the male reproductive tract, binds to sperm heads where it modulates sperm capacitance by inhibiting calcium uptake and nitrogen oxide (NO) production. The chain is Serine protease inhibitor Kazal-type 1 (SPINK1) from Bos taurus (Bovine).